We begin with the raw amino-acid sequence, 400 residues long: Argininosuccinate synthase (400 aa).

ATP is bound at residue 8-16; sequence AYSGGLDTS. Residue Y87 participates in L-citrulline binding. G117 contributes to the ATP binding site. T119, N123, and D124 together coordinate L-aspartate. N123 lines the L-citrulline pocket. Residues R127, S175, E260, and Y272 each coordinate L-citrulline.

It belongs to the argininosuccinate synthase family. Type 1 subfamily. As to quaternary structure, homotetramer.

It is found in the cytoplasm. The catalysed reaction is L-citrulline + L-aspartate + ATP = 2-(N(omega)-L-arginino)succinate + AMP + diphosphate + H(+). It participates in amino-acid biosynthesis; L-arginine biosynthesis; L-arginine from L-ornithine and carbamoyl phosphate: step 2/3. This chain is Argininosuccinate synthase, found in Mycobacterium sp. (strain KMS).